Reading from the N-terminus, the 205-residue chain is 3-demethoxyubiquinol 3-hydroxylase (205 aa).

Residues E54, E84, H87, E136, E168, and H171 each contribute to the Fe cation site.

Belongs to the COQ7 family. The cofactor is Fe cation.

It is found in the cell membrane. It catalyses the reaction a 5-methoxy-2-methyl-3-(all-trans-polyprenyl)benzene-1,4-diol + AH2 + O2 = a 3-demethylubiquinol + A + H2O. It functions in the pathway cofactor biosynthesis; ubiquinone biosynthesis. Functionally, catalyzes the hydroxylation of 2-nonaprenyl-3-methyl-6-methoxy-1,4-benzoquinol during ubiquinone biosynthesis. The protein is 3-demethoxyubiquinol 3-hydroxylase of Paracidovorax citrulli (strain AAC00-1) (Acidovorax citrulli).